The following is a 43-amino-acid chain: Protein PsbN (43 aa).

Residues 5 to 27 (TLVAIPISCLLVSFTGYALYTAF) traverse the membrane as a helical segment.

This sequence belongs to the PsbN family.

The protein localises to the plastid. It localises to the chloroplast thylakoid membrane. May play a role in photosystem I and II biogenesis. In Sphagnum cuspidatum (Bog moss), this protein is Protein PsbN.